The primary structure comprises 867 residues: Inactive tyrosine-protein kinase kin-32 (867 aa).

Residues 3–327 (GLARVFLIGG…GYQMLYNQRD (325 aa)) enclose the FERM domain. Positions 367–631 (ITLKELIGGG…IIEDVRQQII (265 aa)) constitute a Protein kinase domain. ATP-binding positions include 373-381 (IGGGQFGNV) and Lys400. Residues 662-691 (TLYRTMEDQKRQAEEDAKWLEQEDDEDEDD) are a coiled coil. The tract at residues 674 to 729 (AEEDAKWLEQEDDEDEDDQDIDQIPSTSHSSVENIRTSNGYLHHTPTSTRSLRFED) is disordered. The span at 683-694 (QEDDEDEDDQDI) shows a compositional bias: acidic residues. The span at 698–724 (PSTSHSSVENIRTSNGYLHHTPTSTRS) shows a compositional bias: polar residues.

It belongs to the protein kinase superfamily. Tyr protein kinase family. FAK subfamily. Expressed in body wall muscles and some neurons in the head.

Functionally, has apparently no tyrosine kinase activity in vitro when expressed in mammalian cells. This chain is Inactive tyrosine-protein kinase kin-32, found in Caenorhabditis elegans.